Consider the following 181-residue polypeptide: Isopentenyl-diphosphate Delta-isomerase (181 aa).

Mn(2+)-binding residues include H25 and H32. One can recognise a Nudix hydrolase domain in the interval 30–164 (PLHLAFSCWL…PWAFSPWMVM (135 aa)). C67 is a catalytic residue. H69 contributes to the Mn(2+) binding site. E87 contacts Mg(2+). Mn(2+) is bound by residues E114 and E116. The active site involves E116.

It belongs to the IPP isomerase type 1 family. Homodimer. It depends on Mg(2+) as a cofactor. Mn(2+) is required as a cofactor.

It is found in the cytoplasm. The catalysed reaction is isopentenyl diphosphate = dimethylallyl diphosphate. It participates in isoprenoid biosynthesis; dimethylallyl diphosphate biosynthesis; dimethylallyl diphosphate from isopentenyl diphosphate: step 1/1. Functionally, catalyzes the 1,3-allylic rearrangement of the homoallylic substrate isopentenyl (IPP) to its highly electrophilic allylic isomer, dimethylallyl diphosphate (DMAPP). This is Isopentenyl-diphosphate Delta-isomerase from Salmonella agona (strain SL483).